The chain runs to 282 residues: Hydrogenase expression/formation protein HoxQ (282 aa).

This sequence belongs to the HupH/HyaF family.

This is Hydrogenase expression/formation protein HoxQ (hoxQ) from Cupriavidus necator (strain ATCC 17699 / DSM 428 / KCTC 22496 / NCIMB 10442 / H16 / Stanier 337) (Ralstonia eutropha).